A 252-amino-acid polypeptide reads, in one-letter code: MAQRYDRAVTIYSPDGHLLQVEYAQEAVRRGSTVMGLRTNNAIVIGVEKRSVGDLQEERMVRKICMLDDHVVMTFSGLTADARILVSRAQMEAQSHRLNFEKPTTVEYITRYIAQLKQNYTQSNGRRPFGLSCLVGGFDEDGTPHLFQTDPSGIFYEWRANTTGRSSQPVRDYMEKHADEILTIADEAAAIKHIVRTLVSVSSLNHTQMEVAVLKYRQPLRMIDHQVLADLERTVRREIEDEAEASRRPRAP.

The protein belongs to the peptidase T1A family. As to quaternary structure, the 26S proteasome consists of a 20S proteasome core and two 19S regulatory subunits. The 20S proteasome core is composed of 28 subunits that are arranged in four stacked rings, resulting in a barrel-shaped structure. The two end rings are each formed by seven alpha subunits, and the two central rings are each formed by seven beta subunits. The catalytic chamber with the active sites is on the inside of the barrel. As to expression, testis specific.

The protein resides in the cytoplasm. It localises to the nucleus. The proteasome is a multicatalytic proteinase complex which is characterized by its ability to cleave peptides with Arg, Phe, Tyr, Leu, and Glu adjacent to the leaving group at neutral or slightly basic pH. The proteasome has an ATP-dependent proteolytic activity. This is Proteasome subunit alpha type-7-1B (Prosalpha4T2) from Drosophila melanogaster (Fruit fly).